Consider the following 355-residue polypeptide: uncharacterized protein (355 aa).

The segment at 1–61 (MNKKIEKNNN…PKRRGRRPKK (61 aa)) is disordered. The span at 18–37 (YESNTTDNQLIMKKNANSGS) shows a compositional bias: polar residues.

This is an uncharacterized protein from Acanthamoeba polyphaga mimivirus (APMV).